A 273-amino-acid polypeptide reads, in one-letter code: NADPH-dependent 7-cyano-7-deazaguanine reductase (273 aa).

80-82 lines the substrate pocket; that stretch reads VES. An NADPH-binding site is contributed by 82-83; the sequence is SK. The active-site Thioimide intermediate is the C180. D187 (proton donor) is an active-site residue. Residue 219-220 participates in substrate binding; the sequence is HE. 248–249 is an NADPH binding site; sequence RG.

It belongs to the GTP cyclohydrolase I family. QueF type 2 subfamily. In terms of assembly, homodimer.

The protein localises to the cytoplasm. The catalysed reaction is 7-aminomethyl-7-carbaguanine + 2 NADP(+) = 7-cyano-7-deazaguanine + 2 NADPH + 3 H(+). It functions in the pathway tRNA modification; tRNA-queuosine biosynthesis. Its function is as follows. Catalyzes the NADPH-dependent reduction of 7-cyano-7-deazaguanine (preQ0) to 7-aminomethyl-7-deazaguanine (preQ1). The polypeptide is NADPH-dependent 7-cyano-7-deazaguanine reductase (Bordetella pertussis (strain Tohama I / ATCC BAA-589 / NCTC 13251)).